The primary structure comprises 185 residues: MAPKGGPKQQSEEDLLLQDFSRNLSAKSSALFFGNAFIVSAIPIWLYWRIWHMDLIQSAVLYSVMTLVSTYLVAFAYKNVKFVLKHKVAQKREDAVSKEVTRKLSEADNRKMSRKEKDERILWKKNEVADYEATTFSIFYNNTLFLVLVIVASFFILKNFNPTVNYILSISASSGLIALLSTGSK.

M1 carries the post-translational modification N-acetylmethionine. The Lumenal segment spans residues 1–27; that stretch reads MAPKGGPKQQSEEDLLLQDFSRNLSAK. S11 carries the post-translational modification Phosphoserine. A helical transmembrane segment spans residues 28–48; that stretch reads SSALFFGNAFIVSAIPIWLYW. The Cytoplasmic segment spans residues 49–54; the sequence is RIWHMD. Residues 55–76 form a helical membrane-spanning segment; that stretch reads LIQSAVLYSVMTLVSTYLVAFA. Residues 77–135 lie on the Lumenal side of the membrane; that stretch reads YKNVKFVLKHKVAQKREDAVSKEVTRKLSEADNRKMSRKEKDERILWKKNEVADYEATT. Position 105 is a phosphoserine (S105). Residues 136-157 form a helical membrane-spanning segment; that stretch reads FSIFYNNTLFLVLVIVASFFIL. Residues 158 to 163 are Cytoplasmic-facing; the sequence is KNFNPT. Residues 164-184 form a helical membrane-spanning segment; sequence VNYILSISASSGLIALLSTGS.

This sequence belongs to the TRAP-gamma family. As to quaternary structure, heterotetramer of TRAP-alpha, TRAP-beta, TRAP-delta and TRAP-gamma.

It is found in the endoplasmic reticulum membrane. TRAP proteins are part of a complex whose function is to bind calcium to the ER membrane and thereby regulate the retention of ER resident proteins. The sequence is that of Translocon-associated protein subunit gamma (SSR3) from Bos taurus (Bovine).